Here is a 679-residue protein sequence, read N- to C-terminus: UvrABC system protein B (679 aa).

The Helicase ATP-binding domain occupies 25–190; sequence EGVNQGQRYQ…SRNDFDITRG (166 aa). ATP is bound at residue 38–45; sequence GATGTGKT. The Beta-hairpin motif lies at 91 to 114; the sequence is YYDYYQPEAYVPVSDTYIAKTASI. Positions 429–591 constitute a Helicase C-terminal domain; the sequence is QVDDLLAEIR…IVPRPAGKRA (163 aa). The UVR domain occupies 639 to 674; the sequence is PELIDQLETKMKEAAKNLNFEEAASLRDRIKKFRQK.

The protein belongs to the UvrB family. In terms of assembly, forms a heterotetramer with UvrA during the search for lesions. Interacts with UvrC in an incision complex.

Its subcellular location is the cytoplasm. Its function is as follows. The UvrABC repair system catalyzes the recognition and processing of DNA lesions. A damage recognition complex composed of 2 UvrA and 2 UvrB subunits scans DNA for abnormalities. Upon binding of the UvrA(2)B(2) complex to a putative damaged site, the DNA wraps around one UvrB monomer. DNA wrap is dependent on ATP binding by UvrB and probably causes local melting of the DNA helix, facilitating insertion of UvrB beta-hairpin between the DNA strands. Then UvrB probes one DNA strand for the presence of a lesion. If a lesion is found the UvrA subunits dissociate and the UvrB-DNA preincision complex is formed. This complex is subsequently bound by UvrC and the second UvrB is released. If no lesion is found, the DNA wraps around the other UvrB subunit that will check the other stand for damage. This Prochlorococcus marinus (strain MIT 9303) protein is UvrABC system protein B.